The sequence spans 278 residues: HTH-type transcriptional activator RhaS (278 aa).

The region spanning 174–272 is the HTH araC/xylS-type domain; that stretch reads NQLMAWLEDH…NWSPRDIRQG (99 aa). 2 DNA-binding regions (H-T-H motif) span residues 191–212 and 239–262; these read EAVAEQFSLSLRTLHRQLKQHT and VTEIAYRCGFGDSNHFSTLFRREF.

As to quaternary structure, binds DNA as a dimer.

The protein resides in the cytoplasm. Its function is as follows. Activates expression of the rhaBAD and rhaT operons. The polypeptide is HTH-type transcriptional activator RhaS (Salmonella enteritidis PT4 (strain P125109)).